The chain runs to 175 residues: MPITRAEKEAIIQELKEKFKEARVAVLADYRGLNVAEATRLRRRLREAGCEFKVAKNTLTGLAARQAGLEGLDPYLEGPIAIAFGVDPVAPAKVLSDFIRETRKMEIKAGVLEGTIIDARRVRDLADLPPREVLLARVLGGMQAPLYGFAGALQGTLRKFIYALEAIRKQKAGEA.

This sequence belongs to the universal ribosomal protein uL10 family. As to quaternary structure, part of the ribosomal stalk of the 50S ribosomal subunit. The N-terminus interacts with L11 and the large rRNA to form the base of the stalk. The C-terminus forms an elongated spine to which L12 dimers bind in a sequential fashion forming a multimeric L10(L12)X complex.

Functionally, forms part of the ribosomal stalk, playing a central role in the interaction of the ribosome with GTP-bound translation factors. This Pelotomaculum thermopropionicum (strain DSM 13744 / JCM 10971 / SI) protein is Large ribosomal subunit protein uL10.